Here is a 124-residue protein sequence, read N- to C-terminus: Competence protein ComGG (124 aa).

The N-terminal stretch at 1–28 is a signal peptide; sequence MYRTRGFIYPAVLFVSALVLLIVNFVAA.

In terms of assembly, the transformation pili are flexible filaments, consisting mainly of the major pilin ComGC and smaller amounts of the minor pilins, including at least ComGD, ComGF and ComGG. Interacts with ComGC; the interaction is probably direct. Interacts with ComGD. Interacts with ComGF. May act as a link between ComGC, ComGD and ComGF. Homodimer; disulfide-linked. A minor fraction of ComGG is found as a disulfide-bonded homodimer. Post-translationally, partial processing of ComGG in competent cells requires ComC.

Its subcellular location is the cell membrane. It localises to the secreted. In terms of biological role, required for formation of the type IV-like pilus (T4P) that plays a role in transformation. Transformation pili are dynamically extended and retracted, perhaps thereby promoting DNA uptake and transformation. Required for transformation and DNA binding. The protein is Competence protein ComGG (comGG) of Bacillus subtilis (strain 168).